Here is a 470-residue protein sequence, read N- to C-terminus: Calcium/manganese antiporter SLC30A10 (470 aa).

The Cytoplasmic segment spans residues M1 to R10. The chain crosses the membrane as a helical span at residues L11–L31. Residues G32–S34 are Extracellular-facing. A helical membrane pass occupies residues I35–L55. Over G56–G81 the chain is Cytoplasmic. A helical membrane pass occupies residues A82–L102. The Extracellular segment spans residues R103–P113. Residues E114–F134 form a helical membrane-spanning segment. Topologically, residues Q135–V233 are cytoplasmic. Positions R146 to K223 are disordered. Low complexity predominate over residues A171–T184. The helical transmembrane segment at L234 to F254 threads the bilayer. The Extracellular segment spans residues Y255–Y270. Residues I271–I291 traverse the membrane as a helical segment. At K292–F470 the chain is on the cytoplasmic side. Residues Q300–F470 form a required for plasma membrane localization region. The tract at residues Q451–F470 is disordered. Positions T458–F470 are enriched in basic and acidic residues.

Belongs to the cation diffusion facilitator (CDF) transporter (TC 2.A.4) family. SLC30A subfamily. In terms of assembly, forms homodimers. Forms heterodimers and high-molecular weight oligomers with SLC30A3, SLC30A2 and SLC30A4; heterodimerization is mediated by covalent-bound tyrosine residues, occurs probably in a tissue-specific manner and could mediate the intracellular zinc transport activity into early endosomes and recycling endosomes. Specifically expressed in fetal liver and fetal brain.

The protein localises to the cell membrane. The protein resides in the golgi apparatus membrane. Its subcellular location is the recycling endosome membrane. It localises to the early endosome membrane. The enzyme catalyses Mn(2+)(out) + Ca(2+)(in) = Mn(2+)(in) + Ca(2+)(out). It catalyses the reaction Zn(2+)(in) = Zn(2+)(out). Its function is as follows. Calcium:manganese antiporter of the plasma membrane mediating the efflux of intracellular manganese coupled to an active extracellular calcium exchange. Required for intracellular manganese homeostasis, an essential cation for the function of several enzymes, including some crucially important for the metabolism of neurotransmitters and other neuronal metabolic pathways. Manganese can also be cytotoxic and induce oxidative stress, mitochondrial dysfunction and apoptosis. Could also have an intracellular zinc ion transporter activity, directly regulating intracellular zinc ion homeostasis and more indirectly various signaling pathway and biological processes. This Mus musculus (Mouse) protein is Calcium/manganese antiporter SLC30A10.